The sequence spans 474 residues: tRNA-2-methylthio-N(6)-dimethylallyladenosine synthase (474 aa).

The MTTase N-terminal domain maps to 3–120 (KKLHIKTWGC…LPEMLNHVQG (118 aa)). Residues C12, C49, C83, C157, C161, and C164 each contribute to the [4Fe-4S] cluster site. The region spanning 143-375 (RAEGPTAFVS…QDRINQQVLQ (233 aa)) is the Radical SAM core domain. The TRAM domain maps to 378 to 441 (RRMLGTVQRI…TNSLRGTVVR (64 aa)).

This sequence belongs to the methylthiotransferase family. MiaB subfamily. As to quaternary structure, monomer. It depends on [4Fe-4S] cluster as a cofactor.

It is found in the cytoplasm. The enzyme catalyses N(6)-dimethylallyladenosine(37) in tRNA + (sulfur carrier)-SH + AH2 + 2 S-adenosyl-L-methionine = 2-methylsulfanyl-N(6)-dimethylallyladenosine(37) in tRNA + (sulfur carrier)-H + 5'-deoxyadenosine + L-methionine + A + S-adenosyl-L-homocysteine + 2 H(+). Functionally, catalyzes the methylthiolation of N6-(dimethylallyl)adenosine (i(6)A), leading to the formation of 2-methylthio-N6-(dimethylallyl)adenosine (ms(2)i(6)A) at position 37 in tRNAs that read codons beginning with uridine. In Serratia proteamaculans (strain 568), this protein is tRNA-2-methylthio-N(6)-dimethylallyladenosine synthase.